A 198-amino-acid chain; its full sequence is MADQRQRSLSTSGESLYHVLGLDKNATSDDIKKSYRKLALKYHPDKNPDNPEAADKFKEINNAHAILTDATKRNIYDKYGSLGLYVAEQFGEENVNTYFVLSSWWAKALFVVCGLLTCCYCCCCLCCCFNCCCGKCKPKAPEGEETEFYVSPEDLEAQLQSDEREATDTPIVIQPASATETTQLTADSHPSYHTDGFN.

Phosphoserine is present on residues serine 8, serine 10, serine 12, and serine 15. In terms of domain architecture, J spans 13–82 (GESLYHVLGL…RNIYDKYGSL (70 aa)). At tyrosine 17 the chain carries Phosphotyrosine. The residue at position 56 (lysine 56) is an N6-acetyllysine. Serine 151 carries the post-translational modification Phosphoserine.

Homodimer. Interacts with the chaperone complex consisting of HSC70 and SGTA. Interacts with ZDHHC13 (via ANK repeats). Interacts with ZDHHC17 (via ANK repeats). Interacts with SYT1, SYT5 and SYT7, and with SYT9, forming a complex with SNAP25. The interaction with SYT9 is stimulated tenfold in presence of calcium. In terms of processing, formation of the chaperone complex DNAJC5/HSC70 is not regulated by phosphorylation. Ser-10 phosphorylation induces an order-to-disorder transition triggering the interaction with Lys-58. This conformational switch modulates DNAJC5's cellular functions by reducing binding to syntaxin and synaptogamin without altering HSC70 interactions. Palmitoylated. Could be palmitoylated by DHHC3, DHHC7, DHHC15 and DHHC17. Palmitoylation occurs probably in the cysteine-rich domain and regulates DNAJC5 membrane attachment.

Its subcellular location is the cytoplasm. It localises to the cytosol. The protein localises to the membrane. It is found in the cytoplasmic vesicle. The protein resides in the secretory vesicle. Its subcellular location is the chromaffin granule membrane. It localises to the melanosome. The protein localises to the cell membrane. In terms of biological role, acts as a co-chaperone for the SNARE protein SNAP-25. Involved in the calcium-mediated control of a late stage of exocytosis. Acts as a general chaperone in regulated exocytosis. May have an important role in presynaptic function. May be involved in calcium-dependent neurotransmitter release at nerve endings. The polypeptide is DnaJ homolog subfamily C member 5 (Mus musculus (Mouse)).